We begin with the raw amino-acid sequence, 255 residues long: NAD kinase (255 aa).

Catalysis depends on Asp-44, which acts as the Proton acceptor. Residues 44–45, His-49, 114–115, Asp-144, Ala-152, 155–160, and Gln-216 contribute to the NAD(+) site; these read DG, NE, and SAYNLS.

It belongs to the NAD kinase family. Requires a divalent metal cation as cofactor.

Its subcellular location is the cytoplasm. It catalyses the reaction NAD(+) + ATP = ADP + NADP(+) + H(+). Involved in the regulation of the intracellular balance of NAD and NADP, and is a key enzyme in the biosynthesis of NADP. Catalyzes specifically the phosphorylation on 2'-hydroxyl of the adenosine moiety of NAD to yield NADP. In Rickettsia rickettsii (strain Iowa), this protein is NAD kinase.